Consider the following 41-residue polypeptide: Protein UL21 homolog (41 aa).

This sequence belongs to the herpesviridae UL21 family.

The protein is Protein UL21 homolog of Equine herpesvirus 4 (strain 1942) (EHV-4).